The chain runs to 545 residues: Inosine-5'-monophosphate dehydrogenase (545 aa).

CBS domains follow at residues 138-194 and 201-258; these read MITD…DYDT and MTKE…PDAT. Residues aspartate 295 and 347–349 contribute to the NAD(+) site; that span reads GIG. Glycine 349 and glycine 351 together coordinate K(+). Serine 352 contacts IMP. Cysteine 354 is a binding site for K(+). Catalysis depends on cysteine 354, which acts as the Thioimidate intermediate. IMP-binding positions include 387–389, 410–411, and 434–438; these read DGG, GG, and YRGMG. The active-site Proton acceptor is arginine 455. Position 470 (glutamate 470) interacts with IMP. K(+)-binding residues include glutamate 524, serine 525, and histidine 526.

The protein belongs to the IMPDH/GMPR family. Homotetramer. K(+) serves as cofactor.

The catalysed reaction is IMP + NAD(+) + H2O = XMP + NADH + H(+). It functions in the pathway purine metabolism; XMP biosynthesis via de novo pathway; XMP from IMP: step 1/1. Mycophenolic acid (MPA) is a non-competitive inhibitor that prevents formation of the closed enzyme conformation by binding to the same site as the amobile flap. In contrast, mizoribine monophosphate (MZP) is a competitive inhibitor that induces the closed conformation. MPA is a potent inhibitor of mammalian IMPDHs but a poor inhibitor of the bacterial enzymes. MZP is a more potent inhibitor of bacterial IMPDH. Catalyzes the conversion of inosine 5'-phosphate (IMP) to xanthosine 5'-phosphate (XMP), the first committed and rate-limiting step in the de novo synthesis of guanine nucleotides, and therefore plays an important role in the regulation of cell growth. The protein is Inosine-5'-monophosphate dehydrogenase of Bifidobacterium longum (strain NCC 2705).